A 207-amino-acid polypeptide reads, in one-letter code: Protein Nef (207 aa).

Glycine 2 carries N-myristoyl glycine; by host lipidation. Phosphoserine; by host is present on serine 6. The interval 62-66 (EEEEE) is acidic; interacts with host PACS1 and PACS2; stabilizes the interaction of NEF/MHC-I with host AP1M1; necessary for MHC-I internalization. The SH3-binding; interaction with Src family tyrosine kinases stretch occupies residues 70–79 (PVRPQVPLRP). Residues 73–76 (PQVP) carry the PxxP; stabilizes the interaction of NEF/MHC-I with host AP1M1; necessary for MHC-I internalization motif. Residues 109–125 (EILDLWVYNTQGYFPDW) form a mediates dimerization, Nef-PTE1 interaction region. Residues 149 to 181 (VDPQDVEKANEGENNSLLHPMCQHGIEDPEREV) are binding to ATP6V1H. The Dileucine internalization motif; necessary for CD4 internalization motif lies at 165 to 166 (LL). The Diacidic; necessary for CD4 internalization signature appears at 175-176 (ED).

The protein belongs to the lentivirus primate group Nef protein family. Monomer; cytosolic form. Homodimer; membrane bound form. Interacts with Nef associated p21-activated kinase (PAK2); this interaction activates PAK2. Associates with the Nef-MHC-I-AP1 complex; this complex is required for MHC-I internalization. Interacts (via C-terminus) with host PI3-kinase. Interacts with host PACS1; this interaction seems to be weak. Interacts with host PACS2. Interacts with host LCK and MAPK3; these interactions inhibit the kinase activity of the latter. Interacts with host ATP6V1H; this interaction may play a role in CD4 endocytosis. Associates with the CD4-Nef-AP2 complex; this complex is required for CD4 internalization. Interacts with host AP2 subunit alpha and AP2 subunit sigma2. Interacts with TCR-zeta chain; this interaction up-regulates the Fas ligand (FasL) surface expression. Interacts with host HCK, LYN, and SRC; these interactions activate the Src family kinases. Interacts with MAP3K5; this interaction inhibits the Fas and TNFR-mediated death signals. Interacts with beta-COP and PTE1. Interacts with human RACK1; this increases Nef phosphorylation by PKC. Interacts with TP53; this interaction decreases the half-life of TP53, protecting the infected cell against p53-mediated apoptosis. The virion-associated Nef proteins are cleaved by the viral protease to release the soluble C-terminal core protein. Nef is probably cleaved concomitantly with viral structural proteins on maturation of virus particles. Post-translationally, myristoylated. In terms of processing, phosphorylated on serine residues, probably by host PKCdelta and theta.

The protein resides in the host cell membrane. It localises to the virion. Its subcellular location is the secreted. It is found in the host Golgi apparatus membrane. Factor of infectivity and pathogenicity, required for optimal virus replication. Alters numerous pathways of T-lymphocyte function and down-regulates immunity surface molecules in order to evade host defense and increase viral infectivity. Alters the functionality of other immunity cells, like dendritic cells, monocytes/macrophages and NK cells. In terms of biological role, in infected CD4(+) T-lymphocytes, down-regulates the surface MHC-I, mature MHC-II, CD4, CD28, CCR5 and CXCR4 molecules. Mediates internalization and degradation of host CD4 through the interaction of with the cytoplasmic tail of CD4, the recruitment of AP-2 (clathrin adapter protein complex 2), internalization through clathrin coated pits, and subsequent transport to endosomes and lysosomes for degradation. Diverts host MHC-I molecules to the trans-Golgi network-associated endosomal compartments by an endocytic pathway to finally target them for degradation. MHC-I down-regulation may involve AP-1 (clathrin adapter protein complex 1) or possibly Src family kinase-ZAP70/Syk-PI3K cascade recruited by PACS2. In consequence infected cells are masked for immune recognition by cytotoxic T-lymphocytes. Decreasing the number of immune receptors also prevents reinfection by more HIV particles (superinfection). Down-regulates host SERINC3 and SERINC5 thereby excluding these proteins from the viral particles. Virion infectivity is drastically higher when SERINC3 or SERINC5 are excluded from the viral envelope, because these host antiviral proteins impair the membrane fusion event necessary for subsequent virion penetration. Functionally, bypasses host T-cell signaling by inducing a transcriptional program nearly identical to that of anti-CD3 cell activation. Interaction with TCR-zeta chain up-regulates the Fas ligand (FasL). Increasing surface FasL molecules and decreasing surface MHC-I molecules on infected CD4(+) cells send attacking cytotoxic CD8+ T-lymphocytes into apoptosis. Its function is as follows. Plays a role in optimizing the host cell environment for viral replication without causing cell death by apoptosis. Protects the infected cells from apoptosis in order to keep them alive until the next virus generation is ready to strike. Inhibits the Fas and TNFR-mediated death signals by blocking MAP3K5/ASK1. Decreases the half-life of TP53, protecting the infected cell against p53-mediated apoptosis. Inhibits the apoptotic signals regulated by the Bcl-2 family proteins through the formation of a Nef/PI3-kinase/PAK2 complex that leads to activation of PAK2 and induces phosphorylation of host BAD. Extracellular Nef protein targets CD4(+) T-lymphocytes for apoptosis by interacting with CXCR4 surface receptors. The sequence is that of Protein Nef from Homo sapiens (Human).